Reading from the N-terminus, the 65-residue chain is uncharacterized protein (65 aa).

A signal peptide spans 1 to 22 (MKFIKLFTFLVYLFVTLTNVFA).

This is an uncharacterized protein from Invertebrate iridescent virus 6 (IIV-6).